Consider the following 449-residue polypeptide: RNA binding protein fox-1 homolog 2 (449 aa).

The span at 1–21 (MAEGGQAQQQPPQLGPGAAAR) shows a compositional bias: low complexity. The disordered stretch occupies residues 1–186 (MAEGGQAQQQ…STPKRLHVSN (186 aa)). Polar residues-rich tracts occupy residues 77-86 (QGNQEPTTTP) and 118-138 (YAGQ…PHGE). The segment covering 139–176 (QSSNSPSNQNGSLTQTEGGAQTDGQQSQTQSSENSESK) has biased composition (low complexity). One can recognise an RRM domain in the interval 180–256 (KRLHVSNIPF…RKIEVNNATA (77 aa)). An omega-N-methylarginine mark is found at arginine 236, glycine 241, tyrosine 268, and lysine 273. 2 positions are modified to asymmetric dimethylarginine: glutamate 285 and proline 317. 5 positions are modified to omega-N-methylarginine: leucine 318, leucine 323, alanine 336, arginine 340, and glycine 341. Residues arginine 356 and arginine 388 each carry the asymmetric dimethylarginine modification. An asymmetric dimethylarginine; alternate mark is found at arginine 440 and arginine 445. Omega-N-methylarginine; alternate is present on residues arginine 440 and arginine 445.

As to quaternary structure, interacts with ER-alpha N-terminal activation domain. Interacts with RBPMS; the interaction allows cooperative assembly of stable cell-specific alternative splicing regulatory complexes. As to expression, detected in brain neurons (at protein level). Detected in heart, brain, embryo, lung, liver, kidney and ovary.

It is found in the nucleus. Its subcellular location is the cytoplasm. RNA-binding protein that regulates alternative splicing events by binding to 5'-UGCAUGU-3' elements. Prevents binding of U2AF2 to the 3'-splice site. Regulates alternative splicing of tissue-specific exons and of differentially spliced exons during erythropoiesis. Seems to act as a coregulatory factor of ER-alpha. Together with RNA binding proteins RBPMS and MBNL1/2, activates vascular smooth muscle cells alternative splicing events. The protein is RNA binding protein fox-1 homolog 2 (Rbfox2) of Mus musculus (Mouse).